A 147-amino-acid polypeptide reads, in one-letter code: Large ribosomal subunit protein uL11 (147 aa).

Belongs to the universal ribosomal protein uL11 family. As to quaternary structure, part of the ribosomal stalk of the 50S ribosomal subunit. Interacts with L10 and the large rRNA to form the base of the stalk. L10 forms an elongated spine to which L12 dimers bind in a sequential fashion forming a multimeric L10(L12)X complex. Post-translationally, one or more lysine residues are methylated.

Its function is as follows. Forms part of the ribosomal stalk which helps the ribosome interact with GTP-bound translation factors. The polypeptide is Large ribosomal subunit protein uL11 (Sorangium cellulosum (strain So ce56) (Polyangium cellulosum (strain So ce56))).